A 275-amino-acid polypeptide reads, in one-letter code: Glucosamine-6-phosphate deaminase 2 (275 aa).

The Proton acceptor; for enolization step role is filled by aspartate 72. Residues 102-131 adopt a coiled-coil conformation; it reads NNAHILDGNASDLQAECEDFERKIKEAGGI. Aspartate 141 serves as the catalytic For ring-opening step. Residue histidine 143 is the Proton acceptor; for ring-opening step of the active site. The active-site For ring-opening step is glutamate 148.

Belongs to the glucosamine/galactosamine-6-phosphate isomerase family. In terms of assembly, homohexamer.

The protein localises to the cytoplasm. The enzyme catalyses alpha-D-glucosamine 6-phosphate + H2O = beta-D-fructose 6-phosphate + NH4(+). Catalyzes the reversible conversion of alpha-D-glucosamine 6-phosphate (GlcN-6P) into beta-D-fructose 6-phosphate (Fru-6P) and ammonium ion, a regulatory reaction step in de novo uridine diphosphate-N-acetyl-alpha-D-glucosamine (UDP-GlcNAc) biosynthesis via hexosamine pathway. The protein is Glucosamine-6-phosphate deaminase 2 of Xenopus laevis (African clawed frog).